We begin with the raw amino-acid sequence, 307 residues long: Type 2A encapsulin shell protein (307 aa).

The protein belongs to the encapsulin family. Family 2A subfamily. In terms of assembly, homooligomeric. The encapsulin nanocompartment is formed by 60 subunits; monomers form pentamers which assemble to form shells. There are 12 charged pores where the pentamers meet as well as 3-fold axis channels and dimer channels.

The protein resides in the encapsulin nanocompartment. Its function is as follows. Shell component of a type 2A encapsulin nanocompartment. Forms encapsulin nanocompartments about 24 nm in diameter from 60 monomers. Probably encapsulates at least cysteine desulfurase (CyD) and allows passage of cysteine into its interior, probably involved in sulfur metabolism. This chain is Type 2A encapsulin shell protein, found in Mycobacterium avium.